The following is a 261-amino-acid chain: Cytochrome c oxidase subunit 3 (261 aa).

At 1–15 (MTHQTHAYHMVNPSP) the chain is on the mitochondrial matrix side. The chain crosses the membrane as a helical span at residues 16-34 (WPLTGALSALLMTSGLIMW). Residues 35–40 (FHFNST) lie on the Mitochondrial intermembrane side of the membrane. Residues 41–66 (ILLMLGLTTNMLTMYQWWRDIIREST) form a helical membrane-spanning segment. The Mitochondrial matrix segment spans residues 67–72 (FQGHHT). A helical transmembrane segment spans residues 73–105 (PTVQKGLRYGMILFIISEVLFFTGFFWAFYHSS). The Mitochondrial intermembrane segment spans residues 106–128 (LAPTPELGGCWPPTGIHPLNPLE). Residues 129-152 (VPLLNTSVLLASGVSITWAHHSLM) traverse the membrane as a helical segment. Residues 153–155 (EGN) lie on the Mitochondrial matrix side of the membrane. Residues 156-183 (RNHMLQALFITIALGVYFTLLQASEYYE) traverse the membrane as a helical segment. Topologically, residues 184–190 (APFTISD) are mitochondrial intermembrane. The helical transmembrane segment at 191–223 (GVYGSTFFVATGFHGLHVIIGSTFLIVCFFRQL) threads the bilayer. The Mitochondrial matrix segment spans residues 224-232 (KFHFTSSHH). Residues 233 to 256 (FGFEAAAWYWHFVDVVWLFLYVSI) form a helical membrane-spanning segment. At 257-261 (YWWGS) the chain is on the mitochondrial intermembrane side.

Belongs to the cytochrome c oxidase subunit 3 family. In terms of assembly, component of the cytochrome c oxidase (complex IV, CIV), a multisubunit enzyme composed of 14 subunits. The complex is composed of a catalytic core of 3 subunits MT-CO1, MT-CO2 and MT-CO3, encoded in the mitochondrial DNA, and 11 supernumerary subunits COX4I, COX5A, COX5B, COX6A, COX6B, COX6C, COX7A, COX7B, COX7C, COX8 and NDUFA4, which are encoded in the nuclear genome. The complex exists as a monomer or a dimer and forms supercomplexes (SCs) in the inner mitochondrial membrane with NADH-ubiquinone oxidoreductase (complex I, CI) and ubiquinol-cytochrome c oxidoreductase (cytochrome b-c1 complex, complex III, CIII), resulting in different assemblies (supercomplex SCI(1)III(2)IV(1) and megacomplex MCI(2)III(2)IV(2)).

It localises to the mitochondrion inner membrane. The enzyme catalyses 4 Fe(II)-[cytochrome c] + O2 + 8 H(+)(in) = 4 Fe(III)-[cytochrome c] + 2 H2O + 4 H(+)(out). In terms of biological role, component of the cytochrome c oxidase, the last enzyme in the mitochondrial electron transport chain which drives oxidative phosphorylation. The respiratory chain contains 3 multisubunit complexes succinate dehydrogenase (complex II, CII), ubiquinol-cytochrome c oxidoreductase (cytochrome b-c1 complex, complex III, CIII) and cytochrome c oxidase (complex IV, CIV), that cooperate to transfer electrons derived from NADH and succinate to molecular oxygen, creating an electrochemical gradient over the inner membrane that drives transmembrane transport and the ATP synthase. Cytochrome c oxidase is the component of the respiratory chain that catalyzes the reduction of oxygen to water. Electrons originating from reduced cytochrome c in the intermembrane space (IMS) are transferred via the dinuclear copper A center (CU(A)) of subunit 2 and heme A of subunit 1 to the active site in subunit 1, a binuclear center (BNC) formed by heme A3 and copper B (CU(B)). The BNC reduces molecular oxygen to 2 water molecules using 4 electrons from cytochrome c in the IMS and 4 protons from the mitochondrial matrix. This chain is Cytochrome c oxidase subunit 3 (MT-CO3), found in Aepyceros melampus (Impala).